Here is a 400-residue protein sequence, read N- to C-terminus: MGFITKAIPLALAAASVINGAEIMETRAGVQTLADKYIVVMNDGMTDKDFDSHRSWVNRTHRRRLIRRGAKAMGGMKHTYRFPTGLKGYSGHFDEQMINEISKRADVKYIERDARVQINAIEQQDNVPSWGLARVGSKEPGGTTYYYDGTAGEGSTAYVIDTGTDIQHEEFEGRATWGANFVDDMDMDCNGHGTHVSGTIGGKTFGVAKKSNVVAVKVLDCNGSGSNSGVIMGMEWATKDAQQKGADKAVANMSLGGAFSQASNDAAAAIAKGGVFLAVAAGNDNVDAADSSPASEPSICTVAASTEQDSKADFSNFGQVVDVYAPGDSITSAKPGGGSQVLSGTSMATPHVAGLGAYLIGLGKGGGPGLCDTIKQTAIDVIQNPGASTTSKLINNGSGM.

An N-terminal signal peptide occupies residues 1-20; it reads MGFITKAIPLALAAASVING. Residues 21–119 constitute a propeptide that is removed on maturation; that stretch reads AEIMETRAGV…IERDARVQIN (99 aa). Residues 36–118 enclose the Inhibitor I9 domain; the sequence is KYIVVMNDGM…YIERDARVQI (83 aa). N58 carries an N-linked (GlcNAc...) asparagine glycan. Residues 129-400 form the Peptidase S8 domain; sequence SWGLARVGSK…SKLINNGSGM (272 aa). Residues D161 and H192 each act as charge relay system in the active site. N-linked (GlcNAc...) asparagine glycans are attached at residues N222 and N252. S346 (charge relay system) is an active-site residue. An N-linked (GlcNAc...) asparagine glycan is attached at N396.

It belongs to the peptidase S8 family.

The protein resides in the secreted. Its function is as follows. Secreted subtilisin-like serine protease with keratinolytic activity that contributes to pathogenicity. The protein is Subtilisin-like protease 7 (SUB7) of Arthroderma benhamiae (Trichophyton mentagrophytes).